Here is an 872-residue protein sequence, read N- to C-terminus: FHIP family protein CBG19667 (872 aa).

A disordered region spans residues 800-841 (SRSSPRSADEHDSTLFYGRSTIPPPGRKPLLREPSHQETLDD). Residues 829 to 841 (LLREPSHQETLDD) show a composition bias toward basic and acidic residues.

It belongs to the FHIP family.

The polypeptide is FHIP family protein CBG19667 (Caenorhabditis briggsae).